Reading from the N-terminus, the 96-residue chain is Conotoxin Mr15.1 (96 aa).

Residues 1–20 (MSTLKMMLLILLLLLPLATF) form the signal peptide. Residues 21–57 (DSDGQAIPGGGIPSAVNSRVGRLLGGDEKSGRSLEKR) constitute a propeptide that is removed on maturation.

It belongs to the conotoxin N superfamily. Post-translationally, contains 4 disulfide bonds. Expressed by the venom duct.

Its subcellular location is the secreted. The chain is Conotoxin Mr15.1 from Conus marmoreus (Marble cone).